Here is a 958-residue protein sequence, read N- to C-terminus: Glycine dehydrogenase (decarboxylating) (958 aa).

The residue at position 708 (lysine 708) is an N6-(pyridoxal phosphate)lysine.

The protein belongs to the GcvP family. The glycine cleavage system is composed of four proteins: P, T, L and H. Requires pyridoxal 5'-phosphate as cofactor.

It catalyses the reaction N(6)-[(R)-lipoyl]-L-lysyl-[glycine-cleavage complex H protein] + glycine + H(+) = N(6)-[(R)-S(8)-aminomethyldihydrolipoyl]-L-lysyl-[glycine-cleavage complex H protein] + CO2. In terms of biological role, the glycine cleavage system catalyzes the degradation of glycine. The P protein binds the alpha-amino group of glycine through its pyridoxal phosphate cofactor; CO(2) is released and the remaining methylamine moiety is then transferred to the lipoamide cofactor of the H protein. This Proteus mirabilis (strain HI4320) protein is Glycine dehydrogenase (decarboxylating).